A 294-amino-acid chain; its full sequence is Lipoyl synthase (294 aa).

Residues C38, C43, C49, C64, C68, C71, and S277 each contribute to the [4Fe-4S] cluster site. A Radical SAM core domain is found at 50 to 266 (WSRGTATFLL…RSFAEGAGFR (217 aa)).

This sequence belongs to the radical SAM superfamily. Lipoyl synthase family. Requires [4Fe-4S] cluster as cofactor.

The protein resides in the cytoplasm. The enzyme catalyses [[Fe-S] cluster scaffold protein carrying a second [4Fe-4S](2+) cluster] + N(6)-octanoyl-L-lysyl-[protein] + 2 oxidized [2Fe-2S]-[ferredoxin] + 2 S-adenosyl-L-methionine + 4 H(+) = [[Fe-S] cluster scaffold protein] + N(6)-[(R)-dihydrolipoyl]-L-lysyl-[protein] + 4 Fe(3+) + 2 hydrogen sulfide + 2 5'-deoxyadenosine + 2 L-methionine + 2 reduced [2Fe-2S]-[ferredoxin]. It functions in the pathway protein modification; protein lipoylation via endogenous pathway; protein N(6)-(lipoyl)lysine from octanoyl-[acyl-carrier-protein]: step 2/2. In terms of biological role, catalyzes the radical-mediated insertion of two sulfur atoms into the C-6 and C-8 positions of the octanoyl moiety bound to the lipoyl domains of lipoate-dependent enzymes, thereby converting the octanoylated domains into lipoylated derivatives. This chain is Lipoyl synthase, found in Pelodictyon phaeoclathratiforme (strain DSM 5477 / BU-1).